The primary structure comprises 86 residues: Apolipoprotein C-I (86 aa).

The signal sequence occupies residues 1-26; sequence MRLFLSLPVLVVALLMILEGPGPAQG.

This sequence belongs to the apolipoprotein C1 family.

The protein localises to the secreted. Its function is as follows. Inhibitor of lipoprotein binding to the low density lipoprotein (LDL) receptor, LDL receptor-related protein, and very low density lipoprotein (VLDL) receptor. Associates with high density lipoproteins (HDL) and the triacylglycerol-rich lipoproteins in the plasma and makes up about 10% of the protein of the VLDL and 2% of that of HDL. Appears to interfere directly with fatty acid uptake and is also the major plasma inhibitor of cholesteryl ester transfer protein (CETP). Binds free fatty acids and reduces their intracellular esterification. Modulates the interaction of APOE with beta-migrating VLDL and inhibits binding of beta-VLDL to the LDL receptor-related protein. The polypeptide is Apolipoprotein C-I (APOC1) (Aotus nancymaae (Ma's night monkey)).